Here is a 216-residue protein sequence, read N- to C-terminus: Thiosulfate dehydrogenase electron acceptor (216 aa).

An N-terminal signal peptide occupies residues 1 to 22 (MKSIHWPLAGVAALLLSMQAQA). Cytochrome c domains lie at 23–108 (ADGQ…EAMP) and 118–210 (SEAA…ANVG). Heme c-binding residues include C41, C44, H45, C141, C144, and H145.

Post-translationally, binds 2 heme c groups covalently per subunit.

Functionally, acts as an electron acceptor for the thiosulfate dehydrogenase TsdA. In Stutzerimonas stutzeri (strain A1501) (Pseudomonas stutzeri), this protein is Thiosulfate dehydrogenase electron acceptor (tsdB).